The chain runs to 674 residues: MNHSNQMHHDNHASHDHHSGHAHHHGNFKVKFFVSLIFAIPIILLSPLMGVNLPFQFTFPGSEWVVLILSTILFFYGGKPFLSGGKDEIATKKPGMMTLVALGISVAYIYSLYAFYMNNFSSATGHTMDFFWELATLILIMLLGHWIEMNAVGNAGDALKKMAELLPNSAIKVMDNGQREEVKISDIMTDDIVEVKAGESIPTDGIIVQGQTSIDESLVTGESKKVQKNQNDNVIGGSINGSGTIQVKVTAVGEDGYLSQVMGLVNQAQNDKSSAELLSDKVAGYLFYFAVSVGVISFIVWMLIQNDVDFALERLVTVLVIACPHALGLAIPLVTARSTSIGAHNGLIIKNRESVEIAQHIDYVMMDKTGTLTEGNFSVNHYESFKNDLSNDTILSLFASLESQSNHPLAISIVDFAKSKNVSFTNPQDVNNIPGVGLEGLIDNKTYKITNVSYLDKHKLNYDDDLFTKLAQQGNSISYLIEDQQVIGMIAQGDQIKESSKQMVADLLSRNITPVMLTGDNNEVAHAVAKELGISDVHAQLMPEDKESIIKDYQSDGNKVMMVGDGINDAPSLIRADIGIAIGAGTDVAVDSGDIILVKSNPSDIIHFLTLSNNTMRKMVQNLWWGAGYNIVAVPLAAGILAFIGLILSPAIGAILMSLSTIIVAINAFTLKLK.

Residues 1 to 22 (MNHSNQMHHDNHASHDHHSGHA) form a disordered region. Residues 7–19 (MHHDNHASHDHHS) are compositionally biased toward basic and acidic residues. Transmembrane regions (helical) follow at residues 32–52 (FFVSLIFAIPIILLSPLMGVN), 57–77 (FTFPGSEWVVLILSTILFFYG), 95–115 (GMMTLVALGISVAYIYSLYAF), 127–147 (TMDFFWELATLILIMLLGHWI), 284–304 (GYLFYFAVSVGVISFIVWMLI), and 315–335 (LVTVLVIACPHALGLAIPLVT). Aspartate 367 functions as the 4-aspartylphosphate intermediate in the catalytic mechanism. Mg(2+) is bound by residues aspartate 565 and aspartate 569. 2 helical membrane-spanning segments follow: residues 623–645 (LWWGAGYNIVAVPLAAGILAFIG) and 649–671 (SPAIGAILMSLSTIIVAINAFTL).

Belongs to the cation transport ATPase (P-type) (TC 3.A.3) family. Type IB subfamily.

The protein localises to the cell membrane. It catalyses the reaction Cu(+)(in) + ATP + H2O = Cu(+)(out) + ADP + phosphate + H(+). Involved in copper transport. This chain is Probable copper-transporting P-type ATPase B (copB), found in Staphylococcus aureus (strain USA300 / TCH1516).